The following is a 145-amino-acid chain: Ribonuclease P protein component (145 aa).

Residues 120-130 (LPAAPGTMPPA) are compositionally biased toward low complexity. The segment at 120 to 145 (LPAAPGTMPPARTMHPSSLSPTEPDL) is disordered. Residues 134–145 (HPSSLSPTEPDL) are compositionally biased toward polar residues.

This sequence belongs to the RnpA family. As to quaternary structure, consists of a catalytic RNA component (M1 or rnpB) and a protein subunit.

It carries out the reaction Endonucleolytic cleavage of RNA, removing 5'-extranucleotides from tRNA precursor.. In terms of biological role, RNaseP catalyzes the removal of the 5'-leader sequence from pre-tRNA to produce the mature 5'-terminus. It can also cleave other RNA substrates such as 4.5S RNA. The protein component plays an auxiliary but essential role in vivo by binding to the 5'-leader sequence and broadening the substrate specificity of the ribozyme. This Xanthomonas oryzae pv. oryzae (strain MAFF 311018) protein is Ribonuclease P protein component.